A 609-amino-acid chain; its full sequence is Protein alan shepard (609 aa).

The span at 1–12 shows a compositional bias: pro residues; it reads MHPRYSPAPPPL. Positions 1 to 96 are disordered; it reads MHPRYSPAPP…ASVAAAPPTP (96 aa). Residue Y5 is modified to Phosphotyrosine. Low complexity predominate over residues 13-35; that stretch reads HQQQQQQPPQQQQQQMGGPHQQQ. Residues 37–50 show a composition bias toward gly residues; that stretch reads GGVGPGTGHGGVGA. Composition is skewed to low complexity over residues 51–68 and 83–92; these read AVGA…NSQQ and SSSAASVAAA. Phosphotyrosine occurs at positions 152 and 168. Positions 190 to 252 are disordered; the sequence is PATTTYGQRV…AQNQNQQGGE (63 aa). Over residues 204-252 the composition is skewed to low complexity; sequence SPSNTNSSSSSNTGSQSGTLSTSLSNTTNTNTTMGPNGTAQNQNQQGGE. RRM domains follow at residues 257–330 and 336–415; these read TNLY…MAKQ and TNLY…FADG. The segment at 583–609 is disordered; that stretch reads MTDSEQASTAASPDEAYTQYPHQAAPK.

Has a role in the perception of gravity. The chain is Protein alan shepard from Drosophila grimshawi (Hawaiian fruit fly).